Reading from the N-terminus, the 354-residue chain is MKKATCLTDDQRWQSVLARDPNADGEFVFAVRTTGIFCRPSCRARHALRENVSFYANASEALAAGFRPCKRCQPEKANAQQHRLDKITHACRLLEQETPVTLEALADQVAMSPFHLHRLFKATTGMTPKAWQQAWRARRLRESLAKGESVTTSILNAGFPDSSSYYRKADETLGMTAKQFRHGGENLAVRYALADCELGRCLVAESERGICAILLGDDDATLISELQQMFPAADNAPADLMFQQHVREVIASLNQRDTPLTLPLDIRGTAFQQQVWQALRTIPCGETVSYQQLANAIGKPKAVRAVASACAANKLAIIIPCHRVVRGDGTLSGYRWGVSRKAQLLRREAENEER.

The interval 1-171 (MKKATCLTDD…SSSYYRKADE (171 aa)) is methylphosphotriester-DNA--protein-cysteine methyltransferase. A DNA-binding site is contributed by Thr34. The active-site Nucleophile; methyl group acceptor from methylphosphotriester is Cys38. Residues Cys38 and Cys42 each contribute to the Zn(2+) site. 3 residues coordinate DNA: Arg43, Arg45, and Arg67. Zn(2+)-binding residues include Cys69 and Cys72. Residues 85–183 (DKITHACRLL…GMTAKQFRHG (99 aa)) enclose the HTH araC/xylS-type domain. Positions 102-121 (LEALADQVAMSPFHLHRLFK) form a DNA-binding region, H-T-H motif. The segment at 181-354 (RHGGENLAVR…LRREAENEER (174 aa)) is methylated-DNA--protein-cysteine methyltransferase. The Nucleophile; methyl group acceptor from either O6-methylguanine or O4-methylthymine role is filled by Cys321.

The protein in the C-terminal section; belongs to the MGMT family. Zn(2+) is required as a cofactor.

The enzyme catalyses (2'-deoxyribonucleoside 5'-methylphosphotriester)-DNA + L-cysteinyl-[protein] = 2'-deoxyribonucleotide-DNA + S-methyl-L-cysteinyl-[protein] + H(+). It catalyses the reaction a 6-O-methyl-2'-deoxyguanosine in DNA + L-cysteinyl-[protein] = S-methyl-L-cysteinyl-[protein] + a 2'-deoxyguanosine in DNA. It carries out the reaction a 4-O-methyl-thymidine in DNA + L-cysteinyl-[protein] = a thymidine in DNA + S-methyl-L-cysteinyl-[protein]. Functionally, involved in the adaptive response to alkylation damage in DNA caused by alkylating agents. Repairs O6-methylguanine (O6-MeG) and O4-methylthymine (O4-MeT) in DNA. Repairs the methylated nucleobase in DNA by stoichiometrically transferring the methyl group to a cysteine residue in the enzyme (Cys-321). Also specifically repairs the Sp diastereomer of DNA methylphosphotriester lesions by the same mechanism, although the methyl transfer occurs onto a different cysteine residue (Cys-38). Cannot demethylate the other diastereomer, Rp-methylphosphotriester. This is a suicide reaction: the enzyme is irreversibly inactivated. Its function is as follows. The methylation of Ada by methylphosphotriesters in DNA leads to its activation as a transcriptional regulator that activates the transcription of its own gene, ada, and other alkylation resistance genes, alkA, alkB and aidB. This Escherichia coli (strain K12) protein is Bifunctional transcriptional activator/DNA repair enzyme Ada (ada).